A 99-amino-acid polypeptide reads, in one-letter code: MANIKSAIKRVEITERNRLHNKSYKSAVKTLTKKYFDAVAAYSASPSNDALQAAQTSLSAAFSKIDKAVKRGVIHRNNGARKKARLARALNRHLANAAS.

This sequence belongs to the bacterial ribosomal protein bS20 family.

Binds directly to 16S ribosomal RNA. The polypeptide is Small ribosomal subunit protein bS20 (Cyanothece sp. (strain PCC 7425 / ATCC 29141)).